The primary structure comprises 43 residues: Protein PsbN (43 aa).

The chain crosses the membrane as a helical span at residues 7 to 27; it reads LSISIGVMVVAITGFSIYTAF.

It belongs to the PsbN family.

The protein resides in the cellular thylakoid membrane. In terms of biological role, may play a role in photosystem I and II biogenesis. In Trichodesmium erythraeum (strain IMS101), this protein is Protein PsbN.